The primary structure comprises 614 residues: UPF0329 protein ECU03_0090 (614 aa).

Composition is skewed to basic and acidic residues over residues E317–L338 and L345–K354. A disordered region spans residues E317–Y420. Over residues S355–K364 the composition is skewed to basic residues. A compositionally biased stretch (basic and acidic residues) spans A372–S381. Residues E382–L394 are compositionally biased toward acidic residues. A compositionally biased stretch (basic residues) spans S408–Y420.

It belongs to the UPF0329 family.

This chain is UPF0329 protein ECU03_0090, found in Encephalitozoon cuniculi (strain GB-M1) (Microsporidian parasite).